A 328-amino-acid polypeptide reads, in one-letter code: Phosphate acyltransferase (328 aa).

It belongs to the PlsX family. Homodimer. Probably interacts with PlsY.

It localises to the cytoplasm. The catalysed reaction is a fatty acyl-[ACP] + phosphate = an acyl phosphate + holo-[ACP]. It participates in lipid metabolism; phospholipid metabolism. Functionally, catalyzes the reversible formation of acyl-phosphate (acyl-PO(4)) from acyl-[acyl-carrier-protein] (acyl-ACP). This enzyme utilizes acyl-ACP as fatty acyl donor, but not acyl-CoA. The chain is Phosphate acyltransferase from Staphylococcus haemolyticus (strain JCSC1435).